Consider the following 169-residue polypeptide: Disulfide bond formation protein B 1 (169 aa).

Topologically, residues 1 to 14 are cytoplasmic; that stretch reads MSDNTLYLRREKRF. A helical transmembrane segment spans residues 15-31; it reads LVLLGIICLALIGGALY. The Periplasmic segment spans residues 32–49; that stretch reads MQIVLGEAPCPLCILQRY. Cysteine 41 and cysteine 44 form a disulfide bridge. The helical transmembrane segment at 50 to 64 threads the bilayer; it reads ALLFIAIFAFIGAAM. Topologically, residues 65-71 are cytoplasmic; the sequence is SGRRGVT. Residues 72-89 form a helical membrane-spanning segment; that stretch reads VCETLVTLSALGGIAAAG. Residues 90–144 are Periplasmic-facing; it reads RHVWILAHPSDSCGIDVLQPIVDGLPLATLFPTGFQVSGFCTTPYPPVLGLSLAQ. Cysteine 102 and cysteine 130 are disulfide-bonded. A helical transmembrane segment spans residues 145–163; that stretch reads WALAAFVLTAVLVPACIIR. Topologically, residues 164–169 are cytoplasmic; the sequence is NRRKPY.

The protein belongs to the DsbB family.

The protein localises to the cell inner membrane. Required for disulfide bond formation in some periplasmic proteins. Acts by oxidizing the DsbA protein. The protein is Disulfide bond formation protein B 1 of Pseudomonas savastanoi pv. phaseolicola (strain 1448A / Race 6) (Pseudomonas syringae pv. phaseolicola (strain 1448A / Race 6)).